The sequence spans 985 residues: Rho guanine nucleotide exchange factor 2 (985 aa).

The interval M1 to K32 is disordered. A Phorbol-ester/DAG-type zinc finger spans residues G39–C86. Residues S109, S122, S129, S133, and S137 each carry the phosphoserine modification. The segment at R131 to D161 is interaction with DYNLT1. The residue at position 143 (S143) is a Phosphoserine; by PAK4. A phosphoserine mark is found at S151, S163, S172, S174, and S177. Positions K236–D433 constitute a DH domain. At K354 the chain carries N6-acetyllysine. A PH domain is found at K473–R572. Residues L591–M619 are a coiled coil. A phosphoserine mark is found at S646 and S649. Phosphothreonine; by MAPK1 or MAPK3 is present on T680. 3 positions are modified to phosphoserine: S692, S710, and S781. Phosphothreonine is present on T795. Residues E797–E866 adopt a coiled-coil conformation. The residue at position 885 (S885) is a Phosphoserine. Disordered regions lie at residues D890–D909 and H918–S985. At Y893 the chain carries Phosphotyrosine. S895 is subject to Phosphoserine; by PAK4. Residues R919 to D938 show a composition bias toward basic and acidic residues. S931, S939, and S940 each carry phosphoserine. Acidic residues predominate over residues S940–E949. At T944 the chain carries Phosphothreonine. S946, S951, S952, S955, and S959 each carry phosphoserine.

In terms of assembly, found in a complex composed at least of ARHGEF2, NOD2 and RIPK2. Interacts with RIPK2; the interaction mediates tyrosine phosphorylation of RIPK2 by Src kinase CSK. Interacts with RIPK1 and RIPK3. Interacts with YWHAZ/14-3-3 zeta; when phosphorylated at Ser-885. Interacts with the kinases PAK4, AURKA and MAPK1. Interacts with RHOA and RAC1. Interacts with NOD1. Interacts (via the N- terminal zinc finger) with CAPN6 (via domain II). Interacts with DYNLT1. Phosphorylation of Ser-885 by PAK1 induces binding to protein YWHAZ, promoting its relocation to microtubules and the inhibition of its activity. Phosphorylated by AURKA and CDK1 during mitosis, which negatively regulates its activity. Phosphorylation by MAPK1 or MAPK3 increases nucleotide exchange activity. Phosphorylation by PAK4 releases GEF-H1 from the microtubules. Phosphorylated on serine, threonine and tyrosine residues in a RIPK2-dependent manner. In terms of tissue distribution, ubiquitous, with the exception of liver tissue. Levels are high in hemopoietic tissues (thymus, spleen, bone marrow) as well as in kidney and lung. Expressed in the germinal zones of both the neocortex and the cerebellum and in the pontine gray nuclei.

The protein resides in the cytoplasm. The protein localises to the cytoskeleton. Its subcellular location is the cell junction. It is found in the tight junction. It localises to the golgi apparatus. The protein resides in the spindle. The protein localises to the cytoplasmic vesicle. Functionally, activates Rho-GTPases by promoting the exchange of GDP for GTP. May be involved in epithelial barrier permeability, cell motility and polarization, dendritic spine morphology, antigen presentation, leukemic cell differentiation, cell cycle regulation, innate immune response, and cancer. Binds Rac-GTPases, but does not seem to promote nucleotide exchange activity toward Rac-GTPases. May stimulate instead the cortical activity of Rac. Inactive toward CDC42, TC10, or Ras-GTPases. Forms an intracellular sensing system along with NOD1 for the detection of microbial effectors during cell invasion by pathogens. Involved in innate immune signaling transduction pathway promoting cytokine IL6/interleukin-6 and TNF-alpha secretion in macrophage upon stimulation by bacterial peptidoglycans; acts as a signaling intermediate between NOD2 receptor and RIPK2 kinase. Contributes to the tyrosine phosphorylation of RIPK2 through Src tyrosine kinase leading to NF-kappaB activation by NOD2. Overexpression activates Rho-, but not Rac-GTPases, and increases paracellular permeability. Involved in neuronal progenitor cell division and differentiation. Involved in the migration of precerebellar neurons. The sequence is that of Rho guanine nucleotide exchange factor 2 (Arhgef2) from Mus musculus (Mouse).